A 212-amino-acid polypeptide reads, in one-letter code: MTSTLVLASASPARRQVLRAAGIDPVVRVSDVDEDAVAAALPPDTAPATVVVELARAKAAAVAADIPEYAADCVVVGCDSMLLLDGELQGKPHTPEVARARWAQMAGRSAELVTGHCVLRLRGGAVVAEATDCSATTVHFAKPEPEELDAYLASGEPLQVAGAFTLDGLGGWFVDRIEGDPSSVIGIGLPLLRRLLGDVGVGVAQLWRHPAR.

Residue aspartate 79 is the Proton acceptor of the active site.

The protein belongs to the Maf family. The cofactor is a divalent metal cation.

The protein localises to the cytoplasm. The catalysed reaction is a ribonucleoside 5'-triphosphate + H2O = a ribonucleoside 5'-phosphate + diphosphate + H(+). The enzyme catalyses a 2'-deoxyribonucleoside 5'-triphosphate + H2O = a 2'-deoxyribonucleoside 5'-phosphate + diphosphate + H(+). Functionally, nucleoside triphosphate pyrophosphatase. May have a dual role in cell division arrest and in preventing the incorporation of modified nucleotides into cellular nucleic acids. In Nocardia farcinica (strain IFM 10152), this protein is Nucleoside triphosphate pyrophosphatase.